The chain runs to 612 residues: Threonine--tRNA ligase (612 aa).

Positions 218–509 are catalytic; that stretch reads NHRKLGVELG…LSEHFGGNFP (292 aa). Residues cysteine 310, histidine 361, and histidine 486 each contribute to the Zn(2+) site.

It belongs to the class-II aminoacyl-tRNA synthetase family. Homodimer. The cofactor is Zn(2+).

It is found in the cytoplasm. The enzyme catalyses tRNA(Thr) + L-threonine + ATP = L-threonyl-tRNA(Thr) + AMP + diphosphate + H(+). In terms of biological role, catalyzes the attachment of threonine to tRNA(Thr) in a two-step reaction: L-threonine is first activated by ATP to form Thr-AMP and then transferred to the acceptor end of tRNA(Thr). Also edits incorrectly charged L-seryl-tRNA(Thr). The protein is Threonine--tRNA ligase of Helicobacter pylori (strain Shi470).